The sequence spans 251 residues: Phosphate import ATP-binding protein PstB (251 aa).

The ABC transporter domain maps to 5–246 (IEIENFSAYY…PKNRLTEEYL (242 aa)). An ATP-binding site is contributed by 37–44 (GPSGCGKT).

This sequence belongs to the ABC transporter superfamily. Phosphate importer (TC 3.A.1.7) family. The complex is composed of two ATP-binding proteins (PstB), two transmembrane proteins (PstC and PstA) and a solute-binding protein (PstS).

It is found in the cell inner membrane. It carries out the reaction phosphate(out) + ATP + H2O = ADP + 2 phosphate(in) + H(+). In terms of biological role, part of the ABC transporter complex PstSACB involved in phosphate import. Responsible for energy coupling to the transport system. The protein is Phosphate import ATP-binding protein PstB of Thermotoga maritima (strain ATCC 43589 / DSM 3109 / JCM 10099 / NBRC 100826 / MSB8).